Consider the following 330-residue polypeptide: Poly(3-hydroxyalkanoate) polymerase subunit PhaE (330 aa).

Positions 298–328 (RSEVDEIHQTIYQLRKEVKSLKKRLGETEAN) form a coiled coil.

It belongs to the PHA/PHB synthase family. Type III PhaE subfamily. In terms of assembly, forms a heterodimer with PhaC, which may multimerize in the presence of 3-hydroxybutyryl-CoA. Both subunits are required for PHB synthesis in E.coli and in PHA-negative A.eutrophus.

The protein resides in the cytoplasm. It functions in the pathway biopolymer metabolism; poly-(R)-3-hydroxybutanoate biosynthesis. Functionally, when expressed in E.coli with Synechocystis PhaC and C.necator PhaA and PhaB, confers the ability to synthesize up to 13% (w/w) poly(3-hydroxybutyrate) (PHB) depending on the carbon source; all 4 genes are necessary for PHB production. Cell-free in vitro coexpression with PhaE gives a heterodimer able to polymerize 3-hydroxybutyrate-CoA. This subunit has no catalytic activity but enhances the activity of PhaC, the catalytic subunit. This chain is Poly(3-hydroxyalkanoate) polymerase subunit PhaE, found in Synechocystis sp. (strain ATCC 27184 / PCC 6803 / Kazusa).